Consider the following 227-residue polypeptide: Cytochrome c oxidase subunit 2 (227 aa).

Residues 1 to 14 (MAYPLQLGLQDATS) are Mitochondrial intermembrane-facing. Residues 15–45 (PIMEELMNFHDHTLMIVFLISSLVLYIISLM) traverse the membrane as a helical segment. The Mitochondrial matrix portion of the chain corresponds to 46-59 (LTTKLTHTSTMDAQ). A helical membrane pass occupies residues 60 to 87 (EVETIWTILPAAILVLIALPSLRILYMM). Residues 88 to 227 (DEINNPVLTV…YFENWSASMI (140 aa)) are Mitochondrial intermembrane-facing. Cu cation is bound by residues His-161, Cys-196, Glu-198, Cys-200, His-204, and Met-207. A Mg(2+)-binding site is contributed by Glu-198. Tyr-218 is modified (phosphotyrosine).

Belongs to the cytochrome c oxidase subunit 2 family. As to quaternary structure, component of the cytochrome c oxidase (complex IV, CIV), a multisubunit enzyme composed of 14 subunits. The complex is composed of a catalytic core of 3 subunits MT-CO1, MT-CO2 and MT-CO3, encoded in the mitochondrial DNA, and 11 supernumerary subunits COX4I, COX5A, COX5B, COX6A, COX6B, COX6C, COX7A, COX7B, COX7C, COX8 and NDUFA4, which are encoded in the nuclear genome. The complex exists as a monomer or a dimer and forms supercomplexes (SCs) in the inner mitochondrial membrane with NADH-ubiquinone oxidoreductase (complex I, CI) and ubiquinol-cytochrome c oxidoreductase (cytochrome b-c1 complex, complex III, CIII), resulting in different assemblies (supercomplex SCI(1)III(2)IV(1) and megacomplex MCI(2)III(2)IV(2)). Found in a complex with TMEM177, COA6, COX18, COX20, SCO1 and SCO2. Interacts with TMEM177 in a COX20-dependent manner. Interacts with COX20. Interacts with COX16. Cu cation serves as cofactor.

The protein resides in the mitochondrion inner membrane. It carries out the reaction 4 Fe(II)-[cytochrome c] + O2 + 8 H(+)(in) = 4 Fe(III)-[cytochrome c] + 2 H2O + 4 H(+)(out). Its function is as follows. Component of the cytochrome c oxidase, the last enzyme in the mitochondrial electron transport chain which drives oxidative phosphorylation. The respiratory chain contains 3 multisubunit complexes succinate dehydrogenase (complex II, CII), ubiquinol-cytochrome c oxidoreductase (cytochrome b-c1 complex, complex III, CIII) and cytochrome c oxidase (complex IV, CIV), that cooperate to transfer electrons derived from NADH and succinate to molecular oxygen, creating an electrochemical gradient over the inner membrane that drives transmembrane transport and the ATP synthase. Cytochrome c oxidase is the component of the respiratory chain that catalyzes the reduction of oxygen to water. Electrons originating from reduced cytochrome c in the intermembrane space (IMS) are transferred via the dinuclear copper A center (CU(A)) of subunit 2 and heme A of subunit 1 to the active site in subunit 1, a binuclear center (BNC) formed by heme A3 and copper B (CU(B)). The BNC reduces molecular oxygen to 2 water molecules using 4 electrons from cytochrome c in the IMS and 4 protons from the mitochondrial matrix. The sequence is that of Cytochrome c oxidase subunit 2 (MT-CO2) from Micaelamys namaquensis (Namaqua rock rat).